Consider the following 891-residue polypeptide: MILLNMNLQEFKQKYNYDVATKMMQQYLDIKFAHLDCLLLFRMGDFYEMFYEDATIASKVLGIALTKRGKNGEEEIPMCGIPYHALENYLTKLIKENHKIAICDQLETPEEAKNKGGYKAVVSRDVTRIITPGTIIEENFIASDEPNYLASLVIPQNKETASLCYVDLSTSEIFVVNVPEAEILNELARLKPREILLSENLRSSNLADNIFKQLNFRITYQVDSFFAVNKCEKIILDFYKMKDIKGIGEISSGQICTIGSILEYLSLTQKQNIPHLPIPRIINFHSYMAIDVATRRNLEIVTNSQGGSKGSVLSTINHTVTKQGGRLLYNFLSSPLTDITKINQRLNITDFFYSNPAIVSKIREYLKRISDIERCLTRITMNRSSGHDLLSIKYTLETATIIKGVFFDVYGVNLPDFIEKIIKPLTGNEELYNLIEATIREDAPHNLNEGGIIKHEYHPKVAQLHDLINNGKLHIEKLRDQYRKETGIDSLKICHNNVIGLFIDITAKNANKITDPKFIHRQTTVNSVRYTTNELQKLESNLVNAKTLVISLEKALYADICRQVIVKSSYLRMLAISLSRLDVFCNFAYVADEYDYVKPEFTNDLSFNIVKGRHPVVEKALQRESKSFVYNDCRLSEFERIWLITGPNMAGKSTFLRQNAIIAIMAQIGSFVPAKSAKIGVVDKIFSRIGAADDLIKGQSTFMAEMLETSAILAQSTKNSLIILDEVGRGTSTYDGVSIAWSVLEYIHDKLKCRCLFATHYHELTFMSNFLPALQNYTIAIEELGKDILFLHNIISGAADRSYGIHVAALAGLPASVINRAEQILLKFEKTSTIKGKNILSTESNNFSLFNLKPNKTTISNKLYAKFRTIDPDKLSPKEALELIYELKKMV.

Residue 646–653 (GPNMAGKS) participates in ATP binding.

This sequence belongs to the DNA mismatch repair MutS family.

Its function is as follows. This protein is involved in the repair of mismatches in DNA. It is possible that it carries out the mismatch recognition step. This protein has a weak ATPase activity. This chain is DNA mismatch repair protein MutS, found in Rickettsia canadensis (strain McKiel).